A 186-amino-acid chain; its full sequence is ATP synthase subunit delta (186 aa).

Belongs to the ATPase delta chain family. As to quaternary structure, F-type ATPases have 2 components, F(1) - the catalytic core - and F(0) - the membrane proton channel. F(1) has five subunits: alpha(3), beta(3), gamma(1), delta(1), epsilon(1). CF(0) has four main subunits: a(1), b(1), b'(1) and c(10-14). The alpha and beta chains form an alternating ring which encloses part of the gamma chain. F(1) is attached to F(0) by a central stalk formed by the gamma and epsilon chains, while a peripheral stalk is formed by the delta, b and b' chains.

It is found in the cell inner membrane. F(1)F(0) ATP synthase produces ATP from ADP in the presence of a proton or sodium gradient. F-type ATPases consist of two structural domains, F(1) containing the extramembraneous catalytic core and F(0) containing the membrane proton channel, linked together by a central stalk and a peripheral stalk. During catalysis, ATP synthesis in the catalytic domain of F(1) is coupled via a rotary mechanism of the central stalk subunits to proton translocation. Functionally, this protein is part of the stalk that links CF(0) to CF(1). It either transmits conformational changes from CF(0) to CF(1) or is implicated in proton conduction. This Cereibacter sphaeroides (strain ATCC 17025 / ATH 2.4.3) (Rhodobacter sphaeroides) protein is ATP synthase subunit delta.